Consider the following 457-residue polypeptide: Adenylosuccinate synthetase (457 aa).

Residues Gly-45–Lys-51 and Gly-73–Thr-75 contribute to the GTP site. Asp-46 serves as the catalytic Proton acceptor. Mg(2+) is bound by residues Asp-46 and Gly-73. Residues Asp-46–Lys-49, Asn-71–His-74, Thr-163, Arg-177, Asn-255, Thr-270, and Arg-334 contribute to the IMP site. The active-site Proton donor is the His-74. Substrate is bound at residue Val-330–Arg-336. GTP contacts are provided by residues Arg-336, Lys-362–Asp-364, and Gly-444–Gly-446.

This sequence belongs to the adenylosuccinate synthetase family. As to quaternary structure, homodimer. Mg(2+) serves as cofactor.

The protein localises to the cytoplasm. It catalyses the reaction IMP + L-aspartate + GTP = N(6)-(1,2-dicarboxyethyl)-AMP + GDP + phosphate + 2 H(+). It functions in the pathway purine metabolism; AMP biosynthesis via de novo pathway; AMP from IMP: step 1/2. Plays an important role in the de novo pathway and in the salvage pathway of purine nucleotide biosynthesis. Catalyzes the first committed step in the biosynthesis of AMP from IMP. This is Adenylosuccinate synthetase from Aedes aegypti (Yellowfever mosquito).